Consider the following 547-residue polypeptide: MKLKATLTLAAATLVLAACDQSSSANKSTAQTEAKSSSNNTFVYCTAKAPLGFSPALIIEGTSYNASSQQVYNRLVEFKKGSTDIEPALAESWEISDDGLSYTFHLRKGVKFHTTKEFTPTRDFNADDVVFSFQRQLDPNHPYHNVSKGTYPYFKAMKFPELLKSVEKVDDNTIRITLNKTDATFLASLGMDFISIYSAEYADSMLKAGKPETLDSRPVGTGPFVFVDYKTDQAIQYVAHENYWKGRTPLDRLVISIVPDATTRYAKLQAGTCDLILFPNVADLAKMKTDPKVQLLEQKGLNVAYIAFNTEKAPFDNVKVRQALNYAVDKKAIIEAVYQGAGTSAKNPLPPTIWSYNDEIQDYPYDPEKAKQLLAEAGYPNGFETDFWIQPVIRASNPNPKRMAELIMADWAKIGVKTNPVTYEWADYRKRAKEGELTAGIFGWSGDNGDPDNFLSPLLGSSNIGNSNMARFNNSEFDALLNEAIGLTNKEERAKLYKQAQVIVHNQAPWIPVAHSVGFAPLSPRVKGYVQSPFGYDAFYGVSVDGK.

Positions methionine 1–alanine 18 are cleaved as a signal peptide. Residue cysteine 19 is the site of N-palmitoyl cysteine attachment. Cysteine 19 carries S-diacylglycerol cysteine lipidation.

This sequence belongs to the bacterial solute-binding protein 5 family.

The protein localises to the cell inner membrane. Functionally, important role in heme acquisition or metabolism. The polypeptide is Heme-binding protein A (hbpA) (Haemophilus influenzae (strain ATCC 51907 / DSM 11121 / KW20 / Rd)).